The primary structure comprises 343 residues: tRNA N6-adenosine threonylcarbamoyltransferase (343 aa).

H120 and H124 together coordinate Fe cation. Substrate contacts are provided by residues 142–146, D175, G188, D192, and N281; that span reads VVSGG. D310 lines the Fe cation pocket.

This sequence belongs to the KAE1 / TsaD family. Fe(2+) is required as a cofactor.

Its subcellular location is the cytoplasm. The catalysed reaction is L-threonylcarbamoyladenylate + adenosine(37) in tRNA = N(6)-L-threonylcarbamoyladenosine(37) in tRNA + AMP + H(+). Functionally, required for the formation of a threonylcarbamoyl group on adenosine at position 37 (t(6)A37) in tRNAs that read codons beginning with adenine. Is involved in the transfer of the threonylcarbamoyl moiety of threonylcarbamoyl-AMP (TC-AMP) to the N6 group of A37, together with TsaE and TsaB. TsaD likely plays a direct catalytic role in this reaction. In Bacillus cereus (strain ATCC 14579 / DSM 31 / CCUG 7414 / JCM 2152 / NBRC 15305 / NCIMB 9373 / NCTC 2599 / NRRL B-3711), this protein is tRNA N6-adenosine threonylcarbamoyltransferase.